A 427-amino-acid polypeptide reads, in one-letter code: Dorsalin-1 (427 aa).

The signal sequence occupies residues 1 to 20 (MHYFGVLAALSVFNIIACLT). A propeptide spanning residues 21 to 318 (RGKPLENWKK…PRQHSSRSKR (298 aa)) is cleaved from the precursor. Asparagine 71, asparagine 136, asparagine 265, and asparagine 292 each carry an N-linked (GlcNAc...) asparagine glycan. A disordered region spans residues 288–321 (KLGKNDSSSEEEQREEKAIARPRQHSSRSKRSIG). A compositionally biased stretch (basic residues) spans 307 to 321 (ARPRQHSSRSKRSIG). 3 disulfide bridges follow: cysteine 325/cysteine 391, cysteine 354/cysteine 424, and cysteine 358/cysteine 426.

The protein belongs to the TGF-beta family. In terms of assembly, homodimer; disulfide-linked. As to expression, expressed selectively in the dorsal neural tube. Lower levels seen in kidney and myotomal cells.

The protein resides in the secreted. Its function is as follows. Appears to regulate cell differentiation within the neural tube. May regulate the differentiation of cell types along the dorsoventral axis of the neural tube, acting in conjunction with distinct ventralizing signals from the notochord and floor plate. Controls the cell differentiation in the neural tube in several ways: (1) promotes the differentiation of cell types that derive from the dorsal neural tube. (2) ensures that the dorsal neural tube is refractory to ventralizing species from the notochord. (3) can diffuse and influence the fate of cells in more ventral regions of the neural tube. In Gallus gallus (Chicken), this protein is Dorsalin-1 (DSL1).